The following is a 464-amino-acid chain: Protein ABHD18 (464 aa).

Residues 1-24 form the signal peptide; the sequence is MGVSKLDILYRRLLLTKLFIRGWG. An N-linked (GlcNAc...) asparagine glycan is attached at asparagine 341.

Belongs to the AB hydrolase superfamily.

The protein localises to the secreted. This Mus musculus (Mouse) protein is Protein ABHD18.